A 97-amino-acid polypeptide reads, in one-letter code: Defensin-like protein 196 (97 aa).

The signal sequence occupies residues 1–28 (MAKMSALSIFAIFIILVLVIFEIPEIEA). 4 disulfide bridges follow: cysteine 33/cysteine 85, cysteine 46/cysteine 70, cysteine 55/cysteine 80, and cysteine 59/cysteine 82.

The protein belongs to the DEFL family. Protease inhibitor I18 (RTI/MTI-2) subfamily.

It is found in the secreted. This is Defensin-like protein 196 (ATTI4) from Arabidopsis thaliana (Mouse-ear cress).